The sequence spans 70 residues: MKQGIHPDYSATNARCSCGNTFIFQSTMTKDVNLDVCDKCHPFYTGKQRQASSGGRVDKFNKRFGALGSK.

Positions 16, 18, 37, and 40 each coordinate Zn(2+). Residues 48-70 are disordered; sequence QRQASSGGRVDKFNKRFGALGSK.

The protein belongs to the bacterial ribosomal protein bL31 family. Type A subfamily. Part of the 50S ribosomal subunit. The cofactor is Zn(2+).

In terms of biological role, binds the 23S rRNA. This chain is Large ribosomal subunit protein bL31, found in Photobacterium profundum (strain SS9).